The primary structure comprises 302 residues: tRNA dimethylallyltransferase (302 aa).

An ATP-binding site is contributed by 10–17 (GPTAIGKT). 12-17 (TAIGKT) serves as a coordination point for substrate. Positions 35–38 (DSRQ) are interaction with substrate tRNA.

Belongs to the IPP transferase family. In terms of assembly, monomer. Requires Mg(2+) as cofactor.

The catalysed reaction is adenosine(37) in tRNA + dimethylallyl diphosphate = N(6)-dimethylallyladenosine(37) in tRNA + diphosphate. Its function is as follows. Catalyzes the transfer of a dimethylallyl group onto the adenine at position 37 in tRNAs that read codons beginning with uridine, leading to the formation of N6-(dimethylallyl)adenosine (i(6)A). The polypeptide is tRNA dimethylallyltransferase (Christiangramia forsetii (strain DSM 17595 / CGMCC 1.15422 / KT0803) (Gramella forsetii)).